We begin with the raw amino-acid sequence, 6713 residues long: Extracellular matrix-binding protein EbhA (6713 aa).

FIVAR domains are found at residues 1–58 (MGNL…VEQA), 126–184 (AMGQ…VTAA), 252–310 (AMKG…ITQA), 378–436 (QMGN…VEAA), 504–562 (AMAN…VENA), 630–688 (AMGT…INQI), 756–814 (AMGQ…VDRA), 882–940 (AMNS…VDNA), 1008–1066 (AMGA…INDM), 1134–1192 (AMTA…VNSA), 1260–1318 (AMKG…ITQA), 1386–1444 (AMHS…VEQA), 1512–1570 (AMGQ…VERA), 1638–1696 (AMTA…VTNA), 1764–1822 (AMKG…INQA), 1890–1948 (AMTN…VETA), 2142–2200 (AMNQ…INQK), 2268–2325 (AMGN…VQAA), 2393–2451 (AMGQ…VEAA), 2519–2577 (AMQR…VEQA), 2645–2703 (AMDQ…VTAA), 2771–2829 (AMNQ…VTQA), 2897–2955 (AMER…VEAA), 3023–3081 (AMGN…VEAA), 3149–3207 (AMDK…INQA), 3275–3333 (AMGN…VEQA), 3401–3459 (AMTQ…ITAA), 3527–3585 (AMTQ…IQQA), 3653–3711 (AMTN…VEQA), 3779–3837 (AMTQ…VAQA), 3905–3963 (AMGT…VTKA), 4031–4089 (AMGN…ITRA), 4157–4218 (AMDQ…ITNE), 4283–4341 (AMEL…VNGA), 4409–4467 (AMGN…VEQA), 4535–4592 (AMHG…INQV), 4660–4718 (LMDA…VSSA), 4786–4844 (AMKA…IDQA), 4912–4970 (AMEA…VEQL), 5038–5096 (AMQA…VEQL), 5164–5222 (AMET…VEQA), 5290–5344 (SMDQ…VDQA), 5412–5471 (AMDQ…VIKL), and 5666–5722 (AMET…INGA). Residues 6518–6540 (VIKNAIGVVGISGLLASFWFFIA) form a helical membrane-spanning segment. Residues 6616-6713 (RRKEDEEDVE…KKKKSKKNKK (98 aa)) form a disordered region. Composition is skewed to basic and acidic residues over residues 6631 to 6641 (TDEKVLKDNEH) and 6680 to 6690 (QKDNQSKDKKS). Positions 6695 to 6713 (TSKKVAAKKKKKKSKKNKK) are enriched in basic residues.

Its subcellular location is the cell membrane. The polypeptide is Extracellular matrix-binding protein EbhA (ebhA) (Staphylococcus aureus (strain Mu3 / ATCC 700698)).